Reading from the N-terminus, the 392-residue chain is Mitochondrial distribution and morphology protein 10 (392 aa).

Belongs to the MDM10 family. In terms of assembly, component of the ER-mitochondria encounter structure (ERMES) or MDM complex, composed of MMM1, MDM10, MDM12 and MDM34. Associates with the mitochondrial outer membrane sorting assembly machinery SAM(core) complex.

It localises to the mitochondrion outer membrane. In terms of biological role, component of the ERMES/MDM complex, which serves as a molecular tether to connect the endoplasmic reticulum and mitochondria. Components of this complex are involved in the control of mitochondrial shape and protein biogenesis and may function in phospholipid exchange. MDM10 is involved in the late assembly steps of the general translocase of the mitochondrial outer membrane (TOM complex). Functions in the TOM40-specific route of the assembly of outer membrane beta-barrel proteins, including the association of TOM40 with the receptor TOM22 and small TOM proteins. Can associate with the SAM(core) complex as well as the MDM12-MMM1 complex, both involved in late steps of the major beta-barrel assembly pathway, that is responsible for biogenesis of all outer membrane beta-barrel proteins. May act as a switch that shuttles between both complexes and channels precursor proteins into the TOM40-specific pathway. Plays a role in mitochondrial morphology and in the inheritance of mitochondria. This is Mitochondrial distribution and morphology protein 10 from Phaeosphaeria nodorum (strain SN15 / ATCC MYA-4574 / FGSC 10173) (Glume blotch fungus).